A 199-amino-acid chain; its full sequence is NAD(P)H-quinone oxidoreductase subunit 6, chloroplastic (199 aa).

A run of 5 helical transmembrane segments spans residues 13 to 33, 35 to 55, 64 to 84, 96 to 118, and 157 to 177; these read AILL…VLFT, IVYS…LYIL, VQIL…VMLI, WTVG…IAAI, and LPFE…ITMA.

Belongs to the complex I subunit 6 family. As to quaternary structure, NDH is composed of at least 16 different subunits, 5 of which are encoded in the nucleus.

It localises to the plastid. The protein localises to the chloroplast thylakoid membrane. It catalyses the reaction a plastoquinone + NADH + (n+1) H(+)(in) = a plastoquinol + NAD(+) + n H(+)(out). It carries out the reaction a plastoquinone + NADPH + (n+1) H(+)(in) = a plastoquinol + NADP(+) + n H(+)(out). NDH shuttles electrons from NAD(P)H:plastoquinone, via FMN and iron-sulfur (Fe-S) centers, to quinones in the photosynthetic chain and possibly in a chloroplast respiratory chain. The immediate electron acceptor for the enzyme in this species is believed to be plastoquinone. Couples the redox reaction to proton translocation, and thus conserves the redox energy in a proton gradient. The sequence is that of NAD(P)H-quinone oxidoreductase subunit 6, chloroplastic (ndhG) from Huperzia lucidula (Shining clubmoss).